The sequence spans 149 residues: Small ribosomal subunit protein uS13 (149 aa).

The disordered stretch occupies residues 118–149; sequence GRRHELGLPVRGQRTKSTFRKGSSVGVRRKKR.

The protein belongs to the universal ribosomal protein uS13 family. In terms of assembly, part of the 30S ribosomal subunit. Forms a loose heterodimer with protein S19. Forms two bridges to the 50S subunit in the 70S ribosome.

Its function is as follows. Located at the top of the head of the 30S subunit, it contacts several helices of the 16S rRNA. In the 70S ribosome it contacts the 23S rRNA (bridge B1a) and protein L5 of the 50S subunit (bridge B1b), connecting the 2 subunits; these bridges are implicated in subunit movement. The polypeptide is Small ribosomal subunit protein uS13 (Methanothermobacter thermautotrophicus (strain ATCC 29096 / DSM 1053 / JCM 10044 / NBRC 100330 / Delta H) (Methanobacterium thermoautotrophicum)).